A 263-amino-acid chain; its full sequence is Small ribosomal subunit protein eS1 (263 aa).

Basic and acidic residues predominate over residues 235-254; that stretch reads HGEGGGGKREAGDKSERPEG. The interval 235–263 is disordered; it reads HGEGGGGKREAGDKSERPEGYEPPVQESV.

Belongs to the eukaryotic ribosomal protein eS1 family. As to quaternary structure, component of the small ribosomal subunit. Mature ribosomes consist of a small (40S) and a large (60S) subunit. The 40S subunit contains about 33 different proteins and 1 molecule of RNA (18S). The 60S subunit contains about 49 different proteins and 3 molecules of RNA (28S, 5.8S and 5S).

It localises to the cytoplasm. The chain is Small ribosomal subunit protein eS1 from Bombyx mandarina (Wild silk moth).